A 65-amino-acid polypeptide reads, in one-letter code: MKTSVLFAILGLALLFCLSFGVELEETGRECGGLMTRCDGKTTFCCSGMNCSPTWKWCVYAPGRR.

The first 21 residues, methionine 1–glycine 21, serve as a signal peptide directing secretion. A propeptide spanning residues valine 22 to arginine 29 is cleaved from the precursor. 3 disulfide bridges follow: cysteine 31/cysteine 46, cysteine 38/cysteine 51, and cysteine 45/cysteine 58. Proline 62 bears the Proline amide mark.

Belongs to the neurotoxin 10 (Hwtx-1) family. 46 (Jztx-7/10/12) subfamily. Expressed by the venom gland.

The protein localises to the secreted. Its function is as follows. Probable ion channel inhibitor. Shows insecticidal activity when injected into mealworms. The sequence is that of Orally active insecticidal peptide-3 from Selenotypus plumipes (Australian featherleg tarantula).